The sequence spans 498 residues: METLLKPFPSLLLSSPTPYRSIVQQNPSFLSPTTKKKSRKCLLRNKSSKLFCSFLDLAPTSKPESLDVNISWVDPNSNRAQFDVIIIGAGPAGLRLAEQVSKYGIKVCCVDPSPLSMWPNNYGVWVDEFENLGLEDCLDHKWPMTCVHINDNKTKYLGRPYGRVSRKKLKLKLLNSCVENRVKFYKAKVWKVEHEEFESSIVCDDGKKIRGSLVVDASGFASDFIEYDRPRNHGYQIAHGVLVEVDNHPFDLDKMVLMDWRDSHLGNEPYLRVNNAKEPTFLYAMPFDRDLVFLEETSLVSRPVLSYMEVKRRMVARLRHLGIKVKSVIEEEKCVIPMGGPLPRIPQNVMAIGGNSGIVHPSTGYMVARSMALAPVLAEAIVEGLGSTRMIRGSQLYHRVWNGLWPLDRRCVRECYSFGMETLLKLDLKGTRRLFDAFFDLDPKYWQGFLSSRLSVKELGLLSLCLFGHGSNMTRLDIVTKCPLPLVRLIGNLAIESL.

The N-terminal 42 residues, 1 to 42 (METLLKPFPSLLLSSPTPYRSIVQQNPSFLSPTTKKKSRKCL), are a transit peptide targeting the chloroplast.

This sequence belongs to the lycopene cyclase family. In terms of tissue distribution, expressed exclusively in chromoplast-containing tissues of flowers and fruits. Expressed in preanthesis flowers.

Its subcellular location is the plastid. The protein resides in the chloroplast. It catalyses the reaction all-trans-violaxanthin = all-trans-neoxanthin. The enzyme catalyses a carotenoid psi-end group = a carotenoid beta-end derivative. It functions in the pathway carotenoid biosynthesis; neoxanthin biosynthesis. Its pathway is carotenoid biosynthesis; beta-carotene biosynthesis. Involved in the synthesis of neoxanthin, the last product of carotenoid synthesis and a precursor of abscisic acid. Involved in the beta-carotene biosynthesis. The polypeptide is Neoxanthin synthase, chloroplastic (Solanum lycopersicum (Tomato)).